The following is a 324-amino-acid chain: Glutathione synthetase (324 aa).

An ATP-grasp domain is found at 133–317 (KMYALQFTKA…LAHQVIQWVE (185 aa)). 159-215 (VEAKGATVLKPLGNKAGEGILFLQAGDRNFNSIVELSTQQGRLPVMVQTYLPEAKEG) is an ATP binding site. Mg(2+) is bound by residues Glu-288 and Asn-290.

This sequence belongs to the prokaryotic GSH synthase family. Requires Mg(2+) as cofactor. It depends on Mn(2+) as a cofactor.

The enzyme catalyses gamma-L-glutamyl-L-cysteine + glycine + ATP = glutathione + ADP + phosphate + H(+). The protein operates within sulfur metabolism; glutathione biosynthesis; glutathione from L-cysteine and L-glutamate: step 2/2. This Nostoc sp. (strain PCC 7120 / SAG 25.82 / UTEX 2576) protein is Glutathione synthetase.